Here is a 314-residue protein sequence, read N- to C-terminus: Homoserine kinase (314 aa).

95-105 (PHSRGLGSSAA) contributes to the ATP binding site.

It belongs to the GHMP kinase family. Homoserine kinase subfamily.

It localises to the cytoplasm. It carries out the reaction L-homoserine + ATP = O-phospho-L-homoserine + ADP + H(+). It functions in the pathway amino-acid biosynthesis; L-threonine biosynthesis; L-threonine from L-aspartate: step 4/5. Its function is as follows. Catalyzes the ATP-dependent phosphorylation of L-homoserine to L-homoserine phosphate. The protein is Homoserine kinase of Mycolicibacterium vanbaalenii (strain DSM 7251 / JCM 13017 / BCRC 16820 / KCTC 9966 / NRRL B-24157 / PYR-1) (Mycobacterium vanbaalenii).